The sequence spans 239 residues: Proteasome subunit beta type-6 (239 aa).

Alanine 2 is modified (N-acetylalanine). A propeptide spans 2–34 (removed in mature form); the sequence is AATLLAARGAGPAPAWGPEAFTPDWESREVSTG. The active-site Nucleophile is the threonine 35. Position 69 is a phosphothreonine (threonine 69).

Belongs to the peptidase T1B family. The 26S proteasome consists of a 20S proteasome core and two 19S regulatory subunits. The 20S proteasome core is a barrel-shaped complex made of 28 subunits that are arranged in four stacked rings. The two outer rings are each formed by seven alpha subunits, and the two inner rings are formed by seven beta subunits. The proteolytic activity is exerted by three beta-subunits PSMB5, PSMB6 and PSMB7. In terms of assembly, (Microbial infection) Interacts with HIV-1 protein Tat.

Its subcellular location is the cytoplasm. The protein resides in the nucleus. It catalyses the reaction Cleavage of peptide bonds with very broad specificity.. Functionally, component of the 20S core proteasome complex involved in the proteolytic degradation of most intracellular proteins. This complex plays numerous essential roles within the cell by associating with different regulatory particles. Associated with two 19S regulatory particles, forms the 26S proteasome and thus participates in the ATP-dependent degradation of ubiquitinated proteins. The 26S proteasome plays a key role in the maintenance of protein homeostasis by removing misfolded or damaged proteins that could impair cellular functions, and by removing proteins whose functions are no longer required. Associated with the PA200 or PA28, the 20S proteasome mediates ubiquitin-independent protein degradation. This type of proteolysis is required in several pathways including spermatogenesis (20S-PA200 complex) or generation of a subset of MHC class I-presented antigenic peptides (20S-PA28 complex). Within the 20S core complex, PSMB6 displays a peptidylglutamyl-hydrolizing activity also termed postacidic or caspase-like activity, meaning that the peptides bond hydrolysis occurs directly after acidic residues. The sequence is that of Proteasome subunit beta type-6 from Homo sapiens (Human).